A 76-amino-acid polypeptide reads, in one-letter code: Omega-conotoxin-like TeA61 (76 aa).

The signal sequence occupies residues methionine 1 to alanine 22. A propeptide spanning residues aspartate 23 to arginine 51 is cleaved from the precursor. Intrachain disulfides connect cysteine 52–cysteine 67, cysteine 59–cysteine 70, and cysteine 66–cysteine 75.

Belongs to the conotoxin O1 superfamily. Expressed by the venom duct.

The protein resides in the secreted. Its function is as follows. Omega-conotoxins act at presynaptic membranes, they bind and block voltage-gated calcium channels (Cav). This chain is Omega-conotoxin-like TeA61, found in Conus textile (Cloth-of-gold cone).